An 847-amino-acid chain; its full sequence is KN motif and ankyrin repeat domain-containing protein 2 (847 aa).

Positions 1-32 (MAQVLHVPAPFPGTPGQASSAAFPNKEPDPPY) are disordered. An interaction with AIFM1 region spans residues 1-72 (MAQVLHVPAP…PVQRRPRLGS (72 aa)). Phosphoserine occurs at positions 19, 83, 86, 89, and 92. Omega-N-methylarginine is present on R105. Residues 161–182 (LAGVGLLPPTPRSSGLSTPVAP) are disordered. T170 is modified (phosphothreonine). Coiled-coil stretches lie at residues 187–207 (LAHVREQMAGALRKLRQLEEQ) and 284–311 (EAALVAKVAVLETQLKKALQELRAAQTQ). Residue T331 is modified to Phosphothreonine. At S358 the chain carries Phosphoserine. 2 disordered regions span residues 414-473 (GAAR…GGAS) and 502-581 (NGGY…PEEE). Over residues 420–433 (DPPPSPAEPSPSSP) the composition is skewed to pro residues. Composition is skewed to low complexity over residues 434-446 (YPAAEPENPAPAA) and 506-516 (ESSSEDSSTAE). S536 carries the phosphoserine modification. The stretch at 610–647 (RELKVAYTTVLQEWLRLACRSDAHPELVRRHLVTFRAM) is one ANK 0; degenerate repeat. 5 ANK repeats span residues 662-692 (NGNTALHYSVSHANFPVVRQLLDSGVCQVDK), 696-729 (AGYSPIMLTALATLKTQDDIDTILQLFRLGNVNA), 734-763 (AGQTALMLAVSHGRVDVVKALLACEVDVNM), 767-797 (DGSTALMCACEHGHKEITGLLLAVPSCDISL), and 801-831 (DGSTALMVALDAGQSEIASMLYSRMNIKCSF). The tract at residues 665–831 (TALHYSVSHA…YSRMNIKCSF (167 aa)) is interaction with NCOA1.

In terms of assembly, interacts (non-phosphorylated form) with NCOA1; NCOA2 AND NCOA3. Interacts with AIFM1. Interacts with ARHGDIA; the interaction is direct and may regulate the interaction of ARHGDIA with RHOA, RAC1 and CDC42. Interacts (via ANK repeats 1-5) with KIF21A. Phosphorylated by casein kinase II upon estrogen stimulation. Phosphorylation induces the release by KANK2 of NCOA1 and its translocation to the nucleus where NCOA1 can activate gene transcription. As to expression, expressed by podocytes in kidney glomeruli (at protein level).

It is found in the cytoplasm. Its subcellular location is the mitochondrion. Its function is as follows. Involved in transcription regulation by sequestering in the cytoplasm nuclear receptor coactivators such as NCOA1, NCOA2 and NCOA3. Involved in regulation of caspase-independent apoptosis by sequestering the proapoptotic factor AIFM1 in mitochondria. Pro-apoptotic stimuli can induce its proteasomal degradation allowing the translocation of AIFM1 to the nucleus to induce apoptosis. Involved in the negative control of vitamin D receptor signaling pathway. Involved in actin stress fibers formation through its interaction with ARHGDIA and the regulation of the Rho signaling pathway. May thereby play a role in cell adhesion and migration, regulating for instance podocytes migration during development of the kidney. Through the Rho signaling pathway may also regulate cell proliferation. This is KN motif and ankyrin repeat domain-containing protein 2 from Rattus norvegicus (Rat).